The following is a 78-amino-acid chain: D-alanyl carrier protein (78 aa).

Residues 1–78 (MEFRDQVLDL…KIVAVLEELR (78 aa)) form the Carrier domain. Ser36 bears the O-(pantetheine 4'-phosphoryl)serine mark.

Belongs to the DltC family. In terms of processing, 4'-phosphopantetheine is transferred from CoA to a specific serine of apo-DCP.

The protein localises to the cytoplasm. It participates in cell wall biogenesis; lipoteichoic acid biosynthesis. In terms of biological role, carrier protein involved in the D-alanylation of lipoteichoic acid (LTA). The loading of thioester-linked D-alanine onto DltC is catalyzed by D-alanine--D-alanyl carrier protein ligase DltA. The DltC-carried D-alanyl group is further transferred to cell membrane phosphatidylglycerol (PG) by forming an ester bond, probably catalyzed by DltD. D-alanylation of LTA plays an important role in modulating the properties of the cell wall in Gram-positive bacteria, influencing the net charge of the cell wall. In Staphylococcus saprophyticus subsp. saprophyticus (strain ATCC 15305 / DSM 20229 / NCIMB 8711 / NCTC 7292 / S-41), this protein is D-alanyl carrier protein.